Consider the following 29-residue polypeptide: Cytochrome b6-f complex subunit 8 (29 aa).

The helical transmembrane segment at 3 to 23 (ILTLGWVSLLVVFTWSIAMVV) threads the bilayer.

This sequence belongs to the PetN family. In terms of assembly, the 4 large subunits of the cytochrome b6-f complex are cytochrome b6, subunit IV (17 kDa polypeptide, PetD), cytochrome f and the Rieske protein, while the 4 small subunits are PetG, PetL, PetM and PetN. The complex functions as a dimer.

The protein resides in the cellular thylakoid membrane. Component of the cytochrome b6-f complex, which mediates electron transfer between photosystem II (PSII) and photosystem I (PSI), cyclic electron flow around PSI, and state transitions. The chain is Cytochrome b6-f complex subunit 8 from Nostoc punctiforme (strain ATCC 29133 / PCC 73102).